Consider the following 419-residue polypeptide: Tyrosine--tRNA ligase (419 aa).

Tyr-42 serves as a coordination point for L-tyrosine. The 'HIGH' region signature appears at 47-56 (CTAPSLHVGS). L-tyrosine-binding residues include Tyr-179 and Gln-183. Residues 239–243 (KMGKT) carry the 'KMSKS' region motif. An ATP-binding site is contributed by Lys-242. The 67-residue stretch at 353-419 (LGVLAAFVKA…RKRHVLLKLV (67 aa)) folds into the S4 RNA-binding domain.

Belongs to the class-I aminoacyl-tRNA synthetase family. TyrS type 1 subfamily. Homodimer.

The protein localises to the cytoplasm. It catalyses the reaction tRNA(Tyr) + L-tyrosine + ATP = L-tyrosyl-tRNA(Tyr) + AMP + diphosphate + H(+). Its function is as follows. Catalyzes the attachment of tyrosine to tRNA(Tyr) in a two-step reaction: tyrosine is first activated by ATP to form Tyr-AMP and then transferred to the acceptor end of tRNA(Tyr). This chain is Tyrosine--tRNA ligase, found in Methylocella silvestris (strain DSM 15510 / CIP 108128 / LMG 27833 / NCIMB 13906 / BL2).